A 249-amino-acid chain; its full sequence is Phosphomannomutase (249 aa).

Asp15 serves as the catalytic Nucleophile. 2 residues coordinate Mg(2+): Asp15 and Asp17. The active-site Proton donor/acceptor is Asp17. Arg24, Arg126, Arg137, Arg144, Ser182, and Asp184 together coordinate alpha-D-mannose 1-phosphate. The Mg(2+) site is built by Asp210, Phe222, and Thr227.

The protein belongs to the eukaryotic PMM family. As to quaternary structure, homodimer. Mg(2+) is required as a cofactor. Expressed in roots, leaves, flag leaves and immature spikes.

Its subcellular location is the cytoplasm. It carries out the reaction alpha-D-mannose 1-phosphate = D-mannose 6-phosphate. The protein operates within nucleotide-sugar biosynthesis; GDP-alpha-D-mannose biosynthesis; alpha-D-mannose 1-phosphate from D-fructose 6-phosphate: step 2/2. Catalyzes the interconversion of mannose-6-phosphate to mannose-1-phosphate, the precursor for the synthesis of GDP-mannose. GDP-mannose is an essential sugar nucleotide for the synthesis of D-mannose-containing cell wall polysaccharides (galactomannans and glucomannans), glycolipids, glycoproteins and the antioxidant L-ascorbate. Can complement the yeast temperature-sensitive mutant sec53-6. This is Phosphomannomutase from Triticum aestivum (Wheat).